We begin with the raw amino-acid sequence, 210 residues long: Na(+)-translocating NADH-quinone reductase subunit D (210 aa).

6 helical membrane passes run Val10–Ser30, Leu42–Ile62, Ile72–Ala92, Val103–Met123, Phe131–Val151, and Asn178–Ile198.

The protein belongs to the NqrDE/RnfAE family. In terms of assembly, composed of six subunits; NqrA, NqrB, NqrC, NqrD, NqrE and NqrF.

The protein resides in the cell inner membrane. The catalysed reaction is a ubiquinone + n Na(+)(in) + NADH + H(+) = a ubiquinol + n Na(+)(out) + NAD(+). Functionally, NQR complex catalyzes the reduction of ubiquinone-1 to ubiquinol by two successive reactions, coupled with the transport of Na(+) ions from the cytoplasm to the periplasm. NqrA to NqrE are probably involved in the second step, the conversion of ubisemiquinone to ubiquinol. The chain is Na(+)-translocating NADH-quinone reductase subunit D from Shewanella pealeana (strain ATCC 700345 / ANG-SQ1).